A 137-amino-acid chain; its full sequence is Leaf-specific thionin DB4 (137 aa).

An N-terminal signal peptide occupies residues 1–28 (MAPSKSIKSVVICVLILGLVLEQVQVEG). 4 disulfides stabilise this stretch: cysteine 31–cysteine 68, cysteine 32–cysteine 60, cysteine 40–cysteine 58, and cysteine 44–cysteine 54. Residues 75-137 (LNLLPESGEP…DGAVIQSVEA (63 aa)) constitute a propeptide, acidic domain.

Belongs to the plant thionin (TC 1.C.44) family. 4 C-C subfamily.

Its subcellular location is the secreted. In terms of biological role, thionins are small plant proteins which are toxic to animal cells. They seem to exert their toxic effect at the level of the cell membrane. Their precise function is not known. This is Leaf-specific thionin DB4 (THI1.3) from Hordeum vulgare (Barley).